We begin with the raw amino-acid sequence, 341 residues long: GDT1-like protein 1, chloroplastic (341 aa).

A compositionally biased stretch (low complexity) spans Met-1–Ser-13. Disordered stretches follow at residues Met-1–Val-41 and Val-54–Arg-76. The N-terminal 57 residues, Met-1–Arg-57, are a transit peptide targeting the chloroplast. The next 7 helical transmembrane spans lie at Pro-79–Leu-99, Val-117–Phe-137, Ala-158–Leu-178, Phe-203–Gly-223, Gly-246–Ala-266, Leu-286–Gly-306, and Ile-318–Ile-338.

Belongs to the GDT1 family.

It localises to the plastid. It is found in the chloroplast membrane. This chain is GDT1-like protein 1, chloroplastic, found in Oryza sativa subsp. indica (Rice).